The sequence spans 336 residues: MLMTATHREPIVLDTTVRDGSYAVNFQYTDDDVRRIVGDLDAAGIPYIEIGHGVTIGAAAAQGPAAHTDEEYFRAARSVVRNARLGAVIVPALARIETVDLAGDYLDFLRICVIATEFELVMPFVERAQSKGLEVSIQLVKSHLFEPDVLAAAGKRARDVGVRIVYVVDTTGTFLPEDARRYVEALRGASDVSVGFHGHNNLAMAVANTLEAFDAGADFLDGTLMGFGRGAGNCQIECLVAALQRRGHLAAVDLDRIFDAARSDMLGRSPQSYGIDPWEISFGFHGLDSLQVEHLRAAAQQAGLSVSHVIRQTAKSHAGQWLSPQDIDRVVVGMRA.

In terms of domain architecture, Pyruvate carboxyltransferase spans 10–258 (PIVLDTTVRD…LAAVDLDRIF (249 aa)). Mn(2+) is bound by residues Asp-19, His-197, and His-199.

The protein belongs to the 4-hydroxy-2-oxovalerate aldolase family. In terms of assembly, homodimer. A divalent metal cation is required as a cofactor.

It catalyses the reaction oxaloacetate + H(+) = pyruvate + CO2. Its activity is regulated as follows. Activity is abolished upon incubation with Chelex and EDTA. Exhibits oxaloacetate decarboxylase activity. Lacks any detectable aldolase activity with 4-hydroxy-2-oxopentanoate (HOPA), 4-hydroxy-2-oxohexanoate (HOHA) or other 4-hydroxy-2-oxoacids. This chain is Oxaloacetate decarboxylase, found in Mycobacterium tuberculosis (strain ATCC 25618 / H37Rv).